The primary structure comprises 122 residues: SLLQFREMITKMTGKEPIFFYAFYGCYCGLGGRGKPQDATDRCCFVHDCCYGKVTGCDPKKDIYTYSEENGAFVCGGDDPCKKEICECDKNAAICFRNDLDTYDYKYLLYSPENCQEESEPC.

7 disulfides stabilise this stretch: Cys26–Cys115, Cys28–Cys44, Cys43–Cys95, Cys49–Cys122, Cys50–Cys88, Cys57–Cys81, and Cys75–Cys86. Ca(2+)-binding residues include Tyr27, Gly29, and Gly31. The active site involves His47. Asp48 serves as a coordination point for Ca(2+). Asp89 is an active-site residue.

The protein belongs to the phospholipase A2 family. Group II subfamily. D49 sub-subfamily. In terms of assembly, monomer. Ca(2+) is required as a cofactor. As to expression, expressed by the venom gland.

It is found in the secreted. It carries out the reaction a 1,2-diacyl-sn-glycero-3-phosphocholine + H2O = a 1-acyl-sn-glycero-3-phosphocholine + a fatty acid + H(+). Functionally, acidic phospholipase A2 (PLA2) that only causes a mild edema, when subcutaneously injected in the mice foot. PLA2 catalyzes the calcium-dependent hydrolysis of the 2-acyl groups in 3-sn-phosphoglycerides. This Bothriechis lateralis (Side-striped palm pitviper) protein is Acidic phospholipase A2 BlatPLA2.